The chain runs to 730 residues: uncharacterized protein (730 aa).

A phosphoserine mark is found at Ser-82 and Ser-89. Disordered regions lie at residues 82 to 114 (SPVRRHNSIQPSNSGKNSTEKTSTKGSRTTGSY) and 447 to 468 (NTNHNFTTNNNNENESNDSKNE). A compositionally biased stretch (polar residues) spans 89-98 (SIQPSNSGKN). A compositionally biased stretch (low complexity) spans 449–460 (NHNFTTNNNNEN). Residues Ser-483 and Ser-651 each carry the phosphoserine modification.

This is an uncharacterized protein from Saccharomyces cerevisiae (strain ATCC 204508 / S288c) (Baker's yeast).